Consider the following 611-residue polypeptide: Leucine aminopeptidase 2 (611 aa).

Residues 135 to 137 (QCQ) and 265 to 270 (PYGGME) each bind a peptide. H294 serves as a coordination point for Zn(2+). Catalysis depends on E295, which acts as the Proton acceptor. Zn(2+) contacts are provided by H298 and E317. Residue Y383 is the Proton donor of the active site.

The protein belongs to the peptidase M1 family. Zn(2+) is required as a cofactor.

Its subcellular location is the cytoplasm. The protein localises to the nucleus. The enzyme catalyses an epoxide + H2O = an ethanediol. Functionally, aminopeptidase that preferentially cleaves di- and tripeptides. Also has low epoxide hydrolase activity (in vitro). Can hydrolyze the epoxide leukotriene LTA(4) but it forms preferentially 5,6-dihydroxy-7,9,11,14-eicosatetraenoic acid rather than the cytokine leukotriene B(4) as the product compared to the homologous mammalian enzyme (in vitro). This is Leucine aminopeptidase 2 from Chaetomium globosum (strain ATCC 6205 / CBS 148.51 / DSM 1962 / NBRC 6347 / NRRL 1970) (Soil fungus).